Consider the following 61-residue polypeptide: Large ribosomal subunit protein eL37 (61 aa).

Residues Cys-18, Cys-21, Cys-33, and Cys-36 each coordinate Zn(2+). The C4-type zinc finger occupies 18–36 (CRRCGRNAYNPTKKYCASC).

This sequence belongs to the eukaryotic ribosomal protein eL37 family. Zn(2+) is required as a cofactor.

Its function is as follows. Binds to the 23S rRNA. This chain is Large ribosomal subunit protein eL37, found in Methanosphaera stadtmanae (strain ATCC 43021 / DSM 3091 / JCM 11832 / MCB-3).